The primary structure comprises 320 residues: Zona pellucida-binding protein 1 (320 aa).

N-linked (GlcNAc...) asparagine glycans are attached at residues Asn85 and Asn158.

The protein belongs to the zona pellucida-binding protein Sp38 family.

It localises to the cytoplasmic vesicle. Its subcellular location is the secretory vesicle. The protein resides in the acrosome. It is found in the secreted. The protein localises to the acrosome membrane. Functionally, plays a role in sperm morphogenesis and in sperm-oocyte interaction during fertilization. This chain is Zona pellucida-binding protein 1 (ZPBP1), found in Gallus gallus (Chicken).